We begin with the raw amino-acid sequence, 317 residues long: L-lactate dehydrogenase (317 aa).

NAD(+) is bound by residues Val16, Asp37, Lys42, Tyr68, and 82 to 83; that span reads GA. The substrate site is built by Gln85 and Arg91. NAD(+)-binding positions include Thr104, 121 to 123, and Ser146; that span reads ATN. 123 to 126 is a substrate binding site; that stretch reads NPVD. A substrate-binding site is contributed by 151 to 154; the sequence is DTAR. Beta-D-fructose 1,6-bisphosphate contacts are provided by Arg156 and His171. His178 serves as the catalytic Proton acceptor. Tyr222 is subject to Phosphotyrosine. Thr231 contributes to the substrate binding site.

Belongs to the LDH/MDH superfamily. LDH family. In terms of assembly, homotetramer.

The protein resides in the cytoplasm. It catalyses the reaction (S)-lactate + NAD(+) = pyruvate + NADH + H(+). It functions in the pathway fermentation; pyruvate fermentation to lactate; (S)-lactate from pyruvate: step 1/1. Allosterically activated by fructose 1,6-bisphosphate (FBP). Catalyzes the conversion of lactate to pyruvate. This Corynebacterium efficiens (strain DSM 44549 / YS-314 / AJ 12310 / JCM 11189 / NBRC 100395) protein is L-lactate dehydrogenase.